A 197-amino-acid polypeptide reads, in one-letter code: UDP-N-acetylglucosamine transferase subunit ALG13 (197 aa).

This sequence belongs to the glycosyltransferase 28 family. Heterodimer with ALG14 to form a functional enzyme.

It is found in the endoplasmic reticulum. The catalysed reaction is an N-acetyl-alpha-D-glucosaminyl-diphospho-di-trans,poly-cis-dolichol + UDP-N-acetyl-alpha-D-glucosamine = an N,N'-diacetylchitobiosyl-diphospho-di-trans,poly-cis-dolichol + UDP + H(+). Functionally, involved in protein N-glycosylation. Essential for the second step of the dolichol-linked oligosaccharide pathway. This Kluyveromyces lactis (strain ATCC 8585 / CBS 2359 / DSM 70799 / NBRC 1267 / NRRL Y-1140 / WM37) (Yeast) protein is UDP-N-acetylglucosamine transferase subunit ALG13 (ALG13).